A 496-amino-acid chain; its full sequence is Lysine--tRNA ligase (496 aa).

Positions 409 and 416 each coordinate Mg(2+).

It belongs to the class-II aminoacyl-tRNA synthetase family. As to quaternary structure, homodimer. Mg(2+) is required as a cofactor.

The protein localises to the cytoplasm. The enzyme catalyses tRNA(Lys) + L-lysine + ATP = L-lysyl-tRNA(Lys) + AMP + diphosphate. The protein is Lysine--tRNA ligase of Streptococcus suis (strain 05ZYH33).